We begin with the raw amino-acid sequence, 414 residues long: FAD-dependent monooxygenase adaC (414 aa).

FAD-binding residues include Glu-32, Ala-43, Arg-115, Asp-325, and Gly-338.

Belongs to the paxM FAD-dependent monooxygenase family. Requires FAD as cofactor.

It carries out the reaction 3-(2,4-dioxopentyl)-3,6,8,9-tetrahydroxy-1-oxo-1,2,3,4-tetrahydroanthracene-2-carboxyl-[ACP] + NADPH + O2 + H(+) = 3-(2,4-dioxopentyl)-2,3,6,8,9-pentahydroxy-1-oxo-1,2,3,4-tetrahydroanthracene-2-carboxyl-[ACP] + NADP(+) + H2O. Its pathway is secondary metabolite biosynthesis. FAD-dependent monooxygenase; part of the gene cluster that mediates the biosynthesis of the linear tetracyclic TAN-1612 neuropeptide Y receptor antagonist. The decaketide backbone of TAN-1612 is synthesized by the non-reducing polyketide synthase adaA via condensation of one acetyl-CoA starter unit with 9 malonyl-CoA units. The FAD-dependent monooxygenase adaC then performs hydroxylation at C2 while the polaketide chain is still attached to the NRPKS adaA. The alpha-hydroxylation step at C2 appears to be crucial for the following C18-C1 Claisen cyclization and release of the C9-hydroxyl version of TAN-1612 from the NRPKS adaA, two steps performed by the lactamase-like protein adaB. Finally, the O-methyltransferase adaD performs the C9 O-methylation to complete the biosynthesis of TAN-1612. This Aspergillus niger protein is FAD-dependent monooxygenase adaC.